A 387-amino-acid chain; its full sequence is EARP and GARP complex-interacting protein 1 (387 aa).

M1 carries the post-translational modification N-acetylmethionine. 4 WD repeats span residues 132–172 (TAHS…SQAV), 180–222 (GGKG…QIYC), 226–266 (AHGQ…EPVK), and 270–310 (EHSH…SEPF). The tract at residues 310-334 (FGHLVDDDDISDQEDHRSEEKSKEP) is disordered. S320 is modified (phosphoserine). Basic and acidic residues predominate over residues 322-334 (QEDHRSEEKSKEP). One copy of the WD 5 repeat lies at 345–385 (EHEDSVYAVDWSSADPWLFASLSYDGRLVINRVPRALKYHI).

Belongs to the WD repeat EIPR1 family. Interacts with two multisubunit tethering complexes: EARP composed of VPS50, VPS51, VPS52 and VPS53 subunits and GARP complex composed of VPS51, VPS52, VPS53 and VPS54 subunits. Interacts with SNAP29.

It is found in the golgi apparatus. The protein resides in the trans-Golgi network. Functionally, acts as a component of endosomal retrieval machinery that is involved in protein transport from early endosomes to either recycling endosomes or the trans-Golgi network. Mediates the recruitment of Golgi-associated retrograde protein (GARP) complex to the trans-Golgi network and controls early endosome-to-Golgi transport of internalized protein. Promotes the recycling of internalized transferrin receptor (TFRC) to the plasma membrane through interaction with endosome-associated recycling protein (EARP) complex. Controls proper insulin distribution and secretion, and retention of cargo in mature dense core vesicles. Required for the stability of the endosome-associated retrograde protein (EARP) complex subunits and for proper localization and association of EARP with membranes. The polypeptide is EARP and GARP complex-interacting protein 1 (Macaca fascicularis (Crab-eating macaque)).